Reading from the N-terminus, the 467-residue chain is tRNA-2-methylthio-N(6)-dimethylallyladenosine synthase (467 aa).

A disordered region spans residues 1–20 (MSDDTTQIEPAMAQETSPRA). The MTTase N-terminal domain maps to 23–143 (RKVFVKTYGC…LPNALARVRG (121 aa)). [4Fe-4S] cluster is bound by residues cysteine 32, cysteine 68, cysteine 106, cysteine 184, cysteine 188, and cysteine 191. Residues 170-402 (RKRGVSAFLT…QALLSAQQYA (233 aa)) form the Radical SAM core domain. The 63-residue stretch at 405-467 (DSMIGRKMDV…TNSLIAQKLA (63 aa)) folds into the TRAM domain.

This sequence belongs to the methylthiotransferase family. MiaB subfamily. As to quaternary structure, monomer. It depends on [4Fe-4S] cluster as a cofactor.

It is found in the cytoplasm. The enzyme catalyses N(6)-dimethylallyladenosine(37) in tRNA + (sulfur carrier)-SH + AH2 + 2 S-adenosyl-L-methionine = 2-methylsulfanyl-N(6)-dimethylallyladenosine(37) in tRNA + (sulfur carrier)-H + 5'-deoxyadenosine + L-methionine + A + S-adenosyl-L-homocysteine + 2 H(+). Catalyzes the methylthiolation of N6-(dimethylallyl)adenosine (i(6)A), leading to the formation of 2-methylthio-N6-(dimethylallyl)adenosine (ms(2)i(6)A) at position 37 in tRNAs that read codons beginning with uridine. In Brucella canis (strain ATCC 23365 / NCTC 10854 / RM-666), this protein is tRNA-2-methylthio-N(6)-dimethylallyladenosine synthase.